The sequence spans 365 residues: RISC-loading complex subunit TARBP2 (365 aa).

3 sufficient for interaction with PRKRA regions span residues 22 to 105 (MLAA…EPAL), 151 to 233 (SPQQ…DARD), and 286 to 365 (LGAL…AGSK). In terms of domain architecture, DRBM 1 spans 30–97 (TPISLLQEYG…AEVALKHLKG (68 aa)). Ser151 is modified (phosphoserine). DRBM domains follow at residues 158–226 (NPVG…RVHT) and 292–360 (ACCS…YLRI). Positions 227 to 365 (VPLDARDGNE…QYLRIMAGSK (139 aa)) are sufficient for interaction with DICER1.

The protein belongs to the TARBP2 family. In terms of assembly, self-associates. Component of the RISC loading complex (RLC), or micro-RNA (miRNA) loading complex (miRLC), which is composed of DICER1, AGO2 and TARBP2. Note that the trimeric RLC/miRLC is also referred to as RISC. Interacts with EIF2AK2/PKR and inhibits its protein kinase activity. Interacts with DHX9. Interacts with DICER1 and PRKRA. Interacts with DICER1, AGO2, MOV10, EIF6 and RPL7A (60S ribosome subunit); they form a large RNA-induced silencing complex (RISC). Interacts with IRF7; this interaction prevents IRF7 phosphorylation and activation.

It is found in the cytoplasm. The protein localises to the perinuclear region. Its subcellular location is the nucleus. Functionally, required for formation of the RNA induced silencing complex (RISC). Component of the RISC loading complex (RLC), also known as the micro-RNA (miRNA) loading complex (miRLC), which is composed of DICER1, AGO2 and TARBP2. Within the RLC/miRLC, DICER1 and TARBP2 are required to process precursor miRNAs (pre-miRNAs) to mature miRNAs and then load them onto AGO2. AGO2 bound to the mature miRNA constitutes the minimal RISC and may subsequently dissociate from DICER1 and TARBP2. May also play a role in the production of short interfering RNAs (siRNAs) from double-stranded RNA (dsRNA) by DICER1. Binds in vitro to the PRM1 3'-UTR. Seems to act as a repressor of translation. For some pre-miRNA substrates, may also alter the choice of cleavage site by DICER1. Negatively regulates IRF7-mediated IFN-beta signaling triggered by viral infection by inhibiting the phosphorylation of IRF7 and promoting its 'Lys'-48-linked ubiquitination and degradation. This is RISC-loading complex subunit TARBP2 (Tarbp2) from Mus musculus (Mouse).